A 276-amino-acid polypeptide reads, in one-letter code: Casein kinase II subunit beta-3 (276 aa).

Disordered stretches follow at residues 1-22 and 34-86; these read MYKE…LGGA and KKLE…SEGD.

This sequence belongs to the casein kinase 2 subunit beta family. In terms of assembly, heterotetramer of two catalytic alpha subunits and two regulatory beta subunits. Interacts with CCA1. Interacts with LHY. In terms of processing, phosphorylated by alpha subunit.

The protein localises to the cytoplasm. It localises to the cytosol. The protein resides in the nucleus. In terms of biological role, plays a complex role in regulating the basal catalytic activity of the alpha subunit. The tetrameric holoenzyme CK2, composed of two alpha and two beta subunits, phosphorylates the transcription factor PIF1 after an exposure to light, resulting in a proteasome-dependent degradation of PIF1 and promotion of photomorphogenesis. CK2 phosphorylates translation initiation factors. May participate in the regulation of the initiation of translation. Stimulates the binding of CCA1 to promoters. The polypeptide is Casein kinase II subunit beta-3 (CKB3) (Arabidopsis thaliana (Mouse-ear cress)).